Here is a 100-residue protein sequence, read N- to C-terminus: Large ribosomal subunit protein bL21 (100 aa).

The protein belongs to the bacterial ribosomal protein bL21 family. In terms of assembly, part of the 50S ribosomal subunit. Contacts protein L20.

Its function is as follows. This protein binds to 23S rRNA in the presence of protein L20. In Ureaplasma parvum serovar 3 (strain ATCC 27815 / 27 / NCTC 11736), this protein is Large ribosomal subunit protein bL21.